We begin with the raw amino-acid sequence, 434 residues long: Salicylate hydroxylase (434 aa).

9-38 provides a ligand contact to FAD; sequence RIGIVGGGISGVALALELCRYSHIQVQLFE.

Monomer. The cofactor is FAD.

It catalyses the reaction salicylate + NADH + O2 + 2 H(+) = catechol + CO2 + NAD(+) + H2O. Its pathway is aromatic compound metabolism; naphthalene degradation. This chain is Salicylate hydroxylase (nahG), found in Pseudomonas putida (Arthrobacter siderocapsulatus).